The primary structure comprises 364 residues: ERCC4 domain-containing protein EP364R (364 aa).

Residues 3-102 (FLVADHREHH…QLYFFVEGPA (100 aa)) form the ERCC4 domain. Over residues 319–328 (ASRPATQPAA) the composition is skewed to polar residues. The segment at 319 to 352 (ASRPATQPAATQPLHEVSDDATSNASDTSSPIGH) is disordered. Residues 338-348 (DATSNASDTSS) are compositionally biased toward low complexity.

It belongs to the asfivirus EP364R family.

In terms of biological role, plays a role in the inhibition of type I interferon signaling pathway. Mechanistically, specifically interacts with 2',3'-cGAMP and cleaves it via its phosphodiesterase activity. In turn, prevents 2',3'-cGAMP interaction with host ER-resident STING1 leading to inhibition of downstream signaling pathway and type I interferon production. The sequence is that of ERCC4 domain-containing protein EP364R from African swine fever virus (strain Badajoz 1971 Vero-adapted) (Ba71V).